A 326-amino-acid chain; its full sequence is Cyclin-dependent kinase B2-1 (326 aa).

Positions Y28–F318 constitute a Protein kinase domain. Residues V34–V42 and K57 each bind ATP. Residue T38 is modified to Phosphothreonine. At Y39 the chain carries Phosphotyrosine. D159 acts as the Proton acceptor in catalysis. Phosphothreonine is present on T193.

This sequence belongs to the protein kinase superfamily. CMGC Ser/Thr protein kinase family. CDC2/CDKX subfamily. As to quaternary structure, interacts with CYCB2-1 and CYCB2-2. Binding to CYCB2-1 or CYCB2-2 activates CDK kinase. In terms of tissue distribution, expressed in the dividing region of the root apex and the intercalary meristem of internodes.

The protein localises to the nucleus. The protein resides in the cytoplasm. Its subcellular location is the cytoskeleton. It localises to the spindle. It is found in the phragmoplast. It catalyses the reaction L-seryl-[protein] + ATP = O-phospho-L-seryl-[protein] + ADP + H(+). It carries out the reaction L-threonyl-[protein] + ATP = O-phospho-L-threonyl-[protein] + ADP + H(+). The enzyme catalyses [DNA-directed RNA polymerase] + ATP = phospho-[DNA-directed RNA polymerase] + ADP + H(+). Functionally, forms a complex with CYCB2-1 or CYCB2-2 that activates CDK kinase in tobacco BY2 cells during G2/M (mitosis) phases. May be involved in the regulation of the cell cycle at the G2/M transition. The protein is Cyclin-dependent kinase B2-1 (CDKB2-1) of Oryza sativa subsp. japonica (Rice).